We begin with the raw amino-acid sequence, 406 residues long: Cysteine desulfurase (406 aa).

Lysine 226 is subject to N6-(pyridoxal phosphate)lysine. Residue cysteine 364 is the Cysteine persulfide intermediate of the active site.

It belongs to the class-V pyridoxal-phosphate-dependent aminotransferase family. Csd subfamily. As to quaternary structure, homodimer. Interacts with SufE and the SufBCD complex composed of SufB, SufC and SufD. The interaction with SufE is required to mediate the direct transfer of the sulfur atom from the S-sulfanylcysteine. Pyridoxal 5'-phosphate is required as a cofactor.

The protein resides in the cytoplasm. It catalyses the reaction (sulfur carrier)-H + L-cysteine = (sulfur carrier)-SH + L-alanine. The enzyme catalyses L-selenocysteine + AH2 = hydrogenselenide + L-alanine + A + H(+). It participates in cofactor biosynthesis; iron-sulfur cluster biosynthesis. In terms of biological role, cysteine desulfurases mobilize the sulfur from L-cysteine to yield L-alanine, an essential step in sulfur metabolism for biosynthesis of a variety of sulfur-containing biomolecules. Component of the suf operon, which is activated and required under specific conditions such as oxidative stress and iron limitation. Acts as a potent selenocysteine lyase in vitro, that mobilizes selenium from L-selenocysteine. Selenocysteine lyase activity is however unsure in vivo. This is Cysteine desulfurase from Salmonella agona (strain SL483).